The primary structure comprises 210 residues: Large ribosomal subunit protein uL3 (210 aa).

The disordered stretch occupies residues 131–155; it reads GPMSHGSKYHRRVGSMSATTDPGRT.

The protein belongs to the universal ribosomal protein uL3 family. Part of the 50S ribosomal subunit. Forms a cluster with proteins L14 and L19.

In terms of biological role, one of the primary rRNA binding proteins, it binds directly near the 3'-end of the 23S rRNA, where it nucleates assembly of the 50S subunit. The polypeptide is Large ribosomal subunit protein uL3 (Thermoanaerobacter sp. (strain X514)).